Here is a 478-residue protein sequence, read N- to C-terminus: Serine/threonine-protein phosphatase T (478 aa).

TPR repeat units follow at residues Ala-9–Glu-42, Pro-43–Tyr-76, and Lys-78–Asn-110. The tract at residues Ala-151–Asp-463 is catalytic. Residues Asp-221, His-223, Asp-250, and Asn-282 each contribute to the Mn(2+) site. Residue His-283 is the Proton donor/acceptor of the active site. Mn(2+) contacts are provided by His-331 and His-408.

The protein belongs to the PPP phosphatase family. PP-5 (PP-T) subfamily. It depends on Mg(2+) as a cofactor. The cofactor is Mn(2+).

The protein localises to the nucleus. The catalysed reaction is O-phospho-L-seryl-[protein] + H2O = L-seryl-[protein] + phosphate. It carries out the reaction O-phospho-L-threonyl-[protein] + H2O = L-threonyl-[protein] + phosphate. Functionally, protein phosphatase that specifically binds to and dephosphorylates the molecular chaperone Hsp90. Dephosphorylation positively regulates the Hsp90 chaperone machinery. The sequence is that of Serine/threonine-protein phosphatase T from Aspergillus oryzae (strain ATCC 42149 / RIB 40) (Yellow koji mold).